We begin with the raw amino-acid sequence, 176 residues long: Deoxyuridine 5'-triphosphate nucleotidohydrolase (176 aa).

Substrate contacts are provided by residues 67–69 (RSG), Asn-80, 84–86 (TVD), and Lys-94. Residues 141–176 (GGFGSTGGHASVDGAEGGITHGGNSYASVVSDREGQ) form a disordered region.

It belongs to the dUTPase family. Mg(2+) serves as cofactor.

The catalysed reaction is dUTP + H2O = dUMP + diphosphate + H(+). It participates in pyrimidine metabolism; dUMP biosynthesis; dUMP from dCTP (dUTP route): step 2/2. This enzyme is involved in nucleotide metabolism: it produces dUMP, the immediate precursor of thymidine nucleotides and it decreases the intracellular concentration of dUTP so that uracil cannot be incorporated into DNA. This Streptomyces griseus subsp. griseus (strain JCM 4626 / CBS 651.72 / NBRC 13350 / KCC S-0626 / ISP 5235) protein is Deoxyuridine 5'-triphosphate nucleotidohydrolase.